Reading from the N-terminus, the 204-residue chain is Phosphopantothenoylcysteine decarboxylase (204 aa).

FMN contacts are provided by residues F59 and 104-107 (DANT). A substrate-binding site is contributed by N140. The active-site Proton donor is the C173.

This sequence belongs to the HFCD (homooligomeric flavin containing Cys decarboxylase) superfamily. In terms of assembly, homotrimer. It depends on FMN as a cofactor.

The enzyme catalyses N-[(R)-4-phosphopantothenoyl]-L-cysteine + H(+) = (R)-4'-phosphopantetheine + CO2. Its pathway is cofactor biosynthesis; coenzyme A biosynthesis; CoA from (R)-pantothenate: step 3/5. In terms of biological role, catalyzes the decarboxylation of the cysteine moiety of 4-phosphopantothenoylcysteine to form 4'-phosphopantotheine and this reaction forms part of the biosynthesis of coenzyme A. This chain is Phosphopantothenoylcysteine decarboxylase (PPCDC), found in Homo sapiens (Human).